Reading from the N-terminus, the 187-residue chain is Peptide methionine sulfoxide reductase A2-1 (187 aa).

Belongs to the MsrA Met sulfoxide reductase family.

It is found in the cytoplasm. The protein localises to the cytosol. The enzyme catalyses L-methionyl-[protein] + [thioredoxin]-disulfide + H2O = L-methionyl-(S)-S-oxide-[protein] + [thioredoxin]-dithiol. It catalyses the reaction [thioredoxin]-disulfide + L-methionine + H2O = L-methionine (S)-S-oxide + [thioredoxin]-dithiol. Catalyzes the reduction of methionine sulfoxide (MetSO) to methionine in proteins. Plays a protective role against oxidative stress by restoring activity to proteins that have been inactivated by methionine oxidation. MSRA family specifically reduces the MetSO S-enantiomer. In Oryza sativa subsp. japonica (Rice), this protein is Peptide methionine sulfoxide reductase A2-1 (MSRA2-1).